The following is an 859-amino-acid chain: DNA mismatch repair protein MutS (859 aa).

617 to 624 contributes to the ATP binding site; the sequence is GPNMGGKS. Residues 801-820 are disordered; sequence TSLPHEVAPQAPGKPSVPQQ.

Belongs to the DNA mismatch repair MutS family.

In terms of biological role, this protein is involved in the repair of mismatches in DNA. It is possible that it carries out the mismatch recognition step. This protein has a weak ATPase activity. This is DNA mismatch repair protein MutS from Pseudomonas fluorescens (strain ATCC BAA-477 / NRRL B-23932 / Pf-5).